The following is a 360-amino-acid chain: Protein Wnt-2 (360 aa).

The signal sequence occupies residues 1–25; that stretch reads MNAPLGGIWLWLPLLLTWLSPEVSS. 11 disulfides stabilise this stretch: C76-C87, C127-C135, C137-C157, C206-C220, C208-C215, C278-C309, C294-C304, C308-C348, C324-C339, C326-C336, and C331-C332. A lipid anchor (O-palmitoleoyl serine; by PORCN) is attached at S212. A glycan (N-linked (GlcNAc...) asparagine) is linked at N295.

The protein belongs to the Wnt family. In terms of processing, palmitoleoylation is required for efficient binding to frizzled receptors. Depalmitoleoylation leads to Wnt signaling pathway inhibition.

The protein resides in the secreted. Its subcellular location is the extracellular space. It is found in the extracellular matrix. Ligand for members of the frizzled family of seven transmembrane receptors. Probable developmental protein. May be a signaling molecule which affects the development of discrete regions of tissues. Is likely to signal over only few cell diameters. The sequence is that of Protein Wnt-2 (WNT2) from Carollia perspicillata (Seba's short-tailed bat).